The chain runs to 146 residues: 3-dehydroquinate dehydratase (146 aa).

Catalysis depends on tyrosine 24, which acts as the Proton acceptor. The substrate site is built by asparagine 75, histidine 81, and aspartate 88. Histidine 101 (proton donor) is an active-site residue. Substrate contacts are provided by residues 102–103 (LS) and arginine 112.

Belongs to the type-II 3-dehydroquinase family. Homododecamer.

The catalysed reaction is 3-dehydroquinate = 3-dehydroshikimate + H2O. Its pathway is metabolic intermediate biosynthesis; chorismate biosynthesis; chorismate from D-erythrose 4-phosphate and phosphoenolpyruvate: step 3/7. Its function is as follows. Catalyzes a trans-dehydration via an enolate intermediate. This Maricaulis maris (strain MCS10) (Caulobacter maris) protein is 3-dehydroquinate dehydratase.